The following is a 768-amino-acid chain: C-type polyheme cytochrome OmcC (768 aa).

The N-terminal stretch at 1 to 23 (MSRKVTKYSAVLAVSLFAAALAG) is a signal peptide. Cysteine 24 carries the N-palmitoyl cysteine lipid modification. The S-diacylglycerol cysteine moiety is linked to residue cysteine 24. The heme c site is built by cysteine 48, cysteine 51, histidine 52, cysteine 80, cysteine 83, histidine 84, cysteine 112, cysteine 115, histidine 116, cysteine 148, cysteine 151, histidine 152, cysteine 193, cysteine 196, histidine 197, cysteine 238, cysteine 241, histidine 242, cysteine 320, cysteine 323, histidine 324, cysteine 405, cysteine 408, histidine 409, cysteine 454, cysteine 457, histidine 458, cysteine 504, cysteine 507, histidine 508, cysteine 579, cysteine 582, histidine 583, cysteine 611, cysteine 614, and histidine 615.

Post-translationally, binds 12 heme c groups per subunit.

The protein localises to the cell outer membrane. Functionally, not involved in Fe(3+) reduction. This chain is C-type polyheme cytochrome OmcC (omcC), found in Geobacter sulfurreducens (strain ATCC 51573 / DSM 12127 / PCA).